The sequence spans 1378 residues: High molecular weight rhoptry protein 2 (1378 aa).

The N-terminal stretch at 1–19 (MIKVTIFLLLSIFSFNLYG) is a signal peptide. Disulfide bonds link C46–C71 and C233–C240. A helical transmembrane segment spans residues 739-759 (FVYASYILGLVFFIESHIDIA). 3 disulfide bridges follow: C791–C851, C871–C912, and C947–C1034.

In terms of assembly, component of the RhopH complex. RhopH complex is composed of CLAG3.1/CLAG3.2, RhopH2 and RhopH3 with a 1:1:1 subunit stoichiometry. Interacts with CLAG3.1/CLAG3.2.

Its subcellular location is the host cell membrane. It localises to the parasitophorous vacuole membrane. The protein resides in the host cytoplasm. The protein localises to the cytoplasm. It is found in the cytoplasmic vesicle. Its subcellular location is the secretory vesicle. It localises to the rhoptry. Participates in the formation of new permeability pathways in Plasmodium-infected erythrocytes enabling the uptake of nutrients from the blood plasma. Required for maintaining invasion capacity of merozoites. Required for parasite growth and proliferation. This chain is High molecular weight rhoptry protein 2, found in Plasmodium falciparum (isolate 3D7).